We begin with the raw amino-acid sequence, 534 residues long: Zinc finger protein 671 (534 aa).

Residues valine 49 to glutamate 120 enclose the KRAB domain. A C2H2-type 1; degenerate zinc finger spans residues tyrosine 192 to proline 214. 9 C2H2-type zinc fingers span residues histidine 285 to histidine 307, tyrosine 313 to histidine 335, tyrosine 341 to histidine 363, tyrosine 369 to histidine 391, tyrosine 397 to histidine 419, tyrosine 425 to histidine 447, tyrosine 451 to histidine 473, tyrosine 479 to histidine 501, and tyrosine 507 to histidine 529.

This sequence belongs to the krueppel C2H2-type zinc-finger protein family.

The protein localises to the nucleus. Functionally, may be involved in transcriptional regulation. The protein is Zinc finger protein 671 (ZNF671) of Homo sapiens (Human).